A 137-amino-acid polypeptide reads, in one-letter code: Large ribosomal subunit protein uL16 (137 aa).

This sequence belongs to the universal ribosomal protein uL16 family. Part of the 50S ribosomal subunit.

In terms of biological role, binds 23S rRNA and is also seen to make contacts with the A and possibly P site tRNAs. In Rhodopseudomonas palustris (strain BisB5), this protein is Large ribosomal subunit protein uL16.